Here is a 322-residue protein sequence, read N- to C-terminus: DNA repair and recombination protein RadA (322 aa).

105–112 (GMYGSGKT) contacts ATP.

This sequence belongs to the eukaryotic RecA-like protein family.

Its function is as follows. Involved in DNA repair and in homologous recombination. Binds and assemble on single-stranded DNA to form a nucleoprotein filament. Hydrolyzes ATP in a ssDNA-dependent manner and promotes DNA strand exchange between homologous DNA molecules. This chain is DNA repair and recombination protein RadA, found in Methanococcus maripaludis (strain C6 / ATCC BAA-1332).